Here is a 210-residue protein sequence, read N- to C-terminus: Uracil phosphoribosyltransferase (210 aa).

Residues Arg80, Arg105, and 132 to 140 (DPMLATGGS) contribute to the 5-phospho-alpha-D-ribose 1-diphosphate site. Uracil is bound by residues Ile195 and 200–202 (GDA). Asp201 is a 5-phospho-alpha-D-ribose 1-diphosphate binding site.

This sequence belongs to the UPRTase family. Mg(2+) is required as a cofactor.

It carries out the reaction UMP + diphosphate = 5-phospho-alpha-D-ribose 1-diphosphate + uracil. The protein operates within pyrimidine metabolism; UMP biosynthesis via salvage pathway; UMP from uracil: step 1/1. Its activity is regulated as follows. Allosterically activated by GTP. Its function is as follows. Catalyzes the conversion of uracil and 5-phospho-alpha-D-ribose 1-diphosphate (PRPP) to UMP and diphosphate. In Caldanaerobacter subterraneus subsp. tengcongensis (strain DSM 15242 / JCM 11007 / NBRC 100824 / MB4) (Thermoanaerobacter tengcongensis), this protein is Uracil phosphoribosyltransferase.